The following is a 327-amino-acid chain: Flap endonuclease 1 (327 aa).

The segment at 1 to 100 (MGNADLRQLA…DEIADRREQR (100 aa)) is N-domain. The Mg(2+) site is built by Asp-28, Asp-82, Glu-154, Glu-156, Asp-176, Asp-178, and Asp-226. The segment at 118–247 (EAARLDARTQ…TALDAIGEHG (130 aa)) is I-domain. Positions 319-327 (AQTGLDRWT) are interaction with PCNA.

This sequence belongs to the XPG/RAD2 endonuclease family. FEN1 subfamily. As to quaternary structure, interacts with PCNA. PCNA stimulates the nuclease activity without altering cleavage specificity. Mg(2+) serves as cofactor.

Its function is as follows. Structure-specific nuclease with 5'-flap endonuclease and 5'-3' exonuclease activities involved in DNA replication and repair. During DNA replication, cleaves the 5'-overhanging flap structure that is generated by displacement synthesis when DNA polymerase encounters the 5'-end of a downstream Okazaki fragment. Binds the unpaired 3'-DNA end and kinks the DNA to facilitate 5' cleavage specificity. Cleaves one nucleotide into the double-stranded DNA from the junction in flap DNA, leaving a nick for ligation. Also involved in the base excision repair (BER) pathway. Acts as a genome stabilization factor that prevents flaps from equilibrating into structures that lead to duplications and deletions. Also possesses 5'-3' exonuclease activity on nicked or gapped double-stranded DNA. The chain is Flap endonuclease 1 from Halobacterium salinarum (strain ATCC 29341 / DSM 671 / R1).